We begin with the raw amino-acid sequence, 614 residues long: Probable indole-3-acetic acid-amido synthetase GH3.2 (614 aa).

This sequence belongs to the IAA-amido conjugating enzyme family. In terms of tissue distribution, expressed in roots, flowers and callus.

May catalyze the synthesis of indole-3-acetic acid (IAA)-amino acid conjugates, providing a mechanism for the plant to cope with the presence of excess auxin. This Oryza sativa subsp. japonica (Rice) protein is Probable indole-3-acetic acid-amido synthetase GH3.2 (GH3.2).